A 438-amino-acid polypeptide reads, in one-letter code: Succinyl-CoA:glutarate CoA-transferase (438 aa).

The N-terminal 31 residues, 1–31 (MLATLARVAALRRTCLFSGRGGGRGLWTGRP), are a transit peptide targeting the mitochondrion. Asp-205 functions as the Nucleophile in the catalytic mechanism. Residue Lys-394 is modified to N6-acetyllysine.

This sequence belongs to the CoA-transferase III family. In terms of tissue distribution, highly expressed in kidney. Intermediate expression in liver, skeletal muscle and pancreas. Little to no expression detected in other tissues examined.

Its subcellular location is the mitochondrion. It carries out the reaction glutarate + succinyl-CoA = glutaryl-CoA + succinate. The catalysed reaction is 3-hydroxy-3-methylglutarate + succinyl-CoA = (3S)-3-hydroxy-3-methylglutaryl-CoA + succinate. The enzyme catalyses 3-hydroxy-3-methylglutarate + glutaryl-CoA = (3S)-3-hydroxy-3-methylglutaryl-CoA + glutarate. It catalyses the reaction hexanedioate + glutaryl-CoA = hexanedioyl-CoA + glutarate. It carries out the reaction itaconate + glutaryl-CoA = itaconyl-CoA + glutarate. The catalysed reaction is itaconate + succinyl-CoA = itaconyl-CoA + succinate. Its activity is regulated as follows. Inhibited by valsartan and losartan carboxylate. Coenzyme A (CoA) transferase that reversibly catalyzes the transfer of a CoA moiety from a dicarboxyl-CoA to a dicarboxylate in a metabolite recycling process. Displays preference for succinyl-CoA and glutarate-CoA as dicarboxyl-CoA donors and glutarate, succinate, adipate/hexanedioate, itaconate and 3-hydroxy-3-methylglutarate as dicarboxylate acceptors. Acts on intermediates or end products of lysine and tryptophan degradation pathway, in particular catalyzes succinyl-CoA-dependent reesterification of free glutarate into glutaryl-CoA to prevent renal excretion of glutarate. Upon inflammation, may convert macrophage-derived itaconate to itaconyl-CoA in erythroid precursors where it negatively regulates the TCA cycle and heme synthesis to limit erythroid differentiation in the context of stress erythropoiesis. This Homo sapiens (Human) protein is Succinyl-CoA:glutarate CoA-transferase.